The chain runs to 213 residues: Orotate phosphoribosyltransferase (213 aa).

Lys26 provides a ligand contact to 5-phospho-alpha-D-ribose 1-diphosphate. Residue 34-35 (FF) participates in orotate binding. 5-phospho-alpha-D-ribose 1-diphosphate is bound by residues 72–73 (YK), Arg99, Lys100, Lys103, His105, and 124–132 (DDVITAGTA). Orotate is bound by residues Thr128 and Arg156.

This sequence belongs to the purine/pyrimidine phosphoribosyltransferase family. PyrE subfamily. As to quaternary structure, homodimer. Mg(2+) serves as cofactor.

The enzyme catalyses orotidine 5'-phosphate + diphosphate = orotate + 5-phospho-alpha-D-ribose 1-diphosphate. Its pathway is pyrimidine metabolism; UMP biosynthesis via de novo pathway; UMP from orotate: step 1/2. Catalyzes the transfer of a ribosyl phosphate group from 5-phosphoribose 1-diphosphate to orotate, leading to the formation of orotidine monophosphate (OMP). This is Orotate phosphoribosyltransferase from Haemophilus influenzae (strain 86-028NP).